The sequence spans 542 residues: Putative selenium-binding protein (542 aa).

Belongs to the selenium-binding protein family.

The protein is Putative selenium-binding protein of Caenorhabditis elegans.